Reading from the N-terminus, the 87-residue chain is Small ribosomal subunit protein bS20 (87 aa).

Positions 1–22 (MANIKSAKKRAVQSEKRRKHNA) are enriched in basic residues. A disordered region spans residues 1-27 (MANIKSAKKRAVQSEKRRKHNASSRSM).

The protein belongs to the bacterial ribosomal protein bS20 family.

In terms of biological role, binds directly to 16S ribosomal RNA. The sequence is that of Small ribosomal subunit protein bS20 from Pectobacterium atrosepticum (strain SCRI 1043 / ATCC BAA-672) (Erwinia carotovora subsp. atroseptica).